Reading from the N-terminus, the 171-residue chain is Ribosome maturation factor RimP (171 aa).

It belongs to the RimP family.

It localises to the cytoplasm. Its function is as follows. Required for maturation of 30S ribosomal subunits. This chain is Ribosome maturation factor RimP, found in Anaeromyxobacter dehalogenans (strain 2CP-1 / ATCC BAA-258).